The following is a 290-amino-acid chain: Carbonic anhydrase-related protein (290 aa).

Ser-5 bears the Phosphoserine mark. Residues 27–289 (VEWGYEEGVE…LSDRVIRAAF (263 aa)) enclose the Alpha-carbonic anhydrase domain. The Proton donor/acceptor role is filled by His-87. 2 residues coordinate Zn(2+): His-118 and His-141.

Belongs to the alpha-carbonic anhydrase family.

Does not have a carbonic anhydrase catalytic activity. This chain is Carbonic anhydrase-related protein (Ca8), found in Rattus norvegicus (Rat).